A 1008-amino-acid polypeptide reads, in one-letter code: PWWP domain-containing protein 3 (1008 aa).

Residues 78–122 (VSSLLKLKEDVEEEEEEEEEEEEEEEDGEDEEEEEEEEEEEEEEE) are a coiled coil. The interval 84 to 124 (LKEDVEEEEEEEEEEEEEEEDGEDEEEEEEEEEEEEEEEHG) is disordered. Acidic residues predominate over residues 87 to 122 (DVEEEEEEEEEEEEEEEDGEDEEEEEEEEEEEEEEE). The region spanning 127 to 188 (VGDFVWGKIK…ASQLKPFAES (62 aa)) is the PWWP domain. Disordered stretches follow at residues 307–339 (EYHE…GLQW), 399–606 (ETEP…LGQE), and 668–874 (NHKF…GPGS). The segment covering 321-330 (NNDDDDDDEE) has biased composition (acidic residues). Positions 399–409 (ETEPADGDVKS) are enriched in basic and acidic residues. Acidic residues predominate over residues 473 to 490 (DDGDDDGSGDKEESEEKE). Basic and acidic residues-rich tracts occupy residues 511-522 (RFDDSVVERSTE), 677-687 (SSDKEKEELSE), and 707-725 (QKAE…TDKH). The span at 726–738 (GKMKKERKRKKSE) shows a compositional bias: basic residues. 3 stretches are compositionally biased toward basic and acidic residues: residues 739–758 (SKKE…ESTK), 768–787 (SKKQ…ESTK), and 794–818 (NPES…ESTK). Short sequence motifs (nuclear localization signal) lie at residues 786-793 (TKKERKRK), 809-816 (TRKESVES), and 841-848 (EKKKKKKR). Residues 804-824 (VEEEETRKESVESTKKERKRK) are a coiled coil. Residues 842 to 854 (KKKKKKREGKSKK) are compositionally biased toward basic residues.

It belongs to the PDP family. Interacts with DEK3. Binds to LHP1, MSI4/FVE and MSI5. Component of the PRC2 (polycomb repressive complex 2) complex which regulates histone methylation on histone H3K27.

Its subcellular location is the nucleus. Its function is as follows. Together with PDP1, PDP2 and PDP6, interacts with MSI4/FVE and MSI5 to suppress FLC, MAF4 and MAF5 expression by regulating the function of the PRC2 complex and modulating H3K27me3 level, thereby promoting flowering. The sequence is that of PWWP domain-containing protein 3 from Arabidopsis thaliana (Mouse-ear cress).